A 156-amino-acid chain; its full sequence is Probable succinate transporter subunit YjjB (156 aa).

4 consecutive transmembrane segments (helical) span residues 7–27, 54–74, 86–106, and 128–148; these read WALL…AMVF, FGMN…IIGI, VFTV…TAMI, and FLKA…PGIW.

It belongs to the ThrE exporter (TC 2.A.79) family. The transporter is composed of YjjB and YjjP.

It is found in the cell inner membrane. Involved in succinate export with YjjP. Both proteins are required for export. This chain is Probable succinate transporter subunit YjjB, found in Pectobacterium atrosepticum (strain SCRI 1043 / ATCC BAA-672) (Erwinia carotovora subsp. atroseptica).